We begin with the raw amino-acid sequence, 91 residues long: Small ribosomal subunit protein bS20 (91 aa).

It belongs to the bacterial ribosomal protein bS20 family.

Its function is as follows. Binds directly to 16S ribosomal RNA. This chain is Small ribosomal subunit protein bS20, found in Acidithiobacillus ferrooxidans (strain ATCC 23270 / DSM 14882 / CIP 104768 / NCIMB 8455) (Ferrobacillus ferrooxidans (strain ATCC 23270)).